The primary structure comprises 2408 residues: Protein ELYS (2408 aa).

The segment at 1–492 (MQNLEAQVTG…SGLIHFACTG (492 aa)) is seven-bladed beta propeller repeats. The segment at 1016–2408 (YSLPSLVWRE…AKPVTRRKMR (1393 aa)) is disordered. Positions 1124 to 1145 (PLTSSDTDNNQTPHKSPLLKTS) are enriched in polar residues. Residues 1457-1466 (NDQDSEEIEE) show a composition bias toward acidic residues. Composition is skewed to polar residues over residues 1705–1719 (INEG…QSTL) and 1735–1750 (PADS…TLPT). Residues 2136 to 2149 (QASKIQEDLSDTPR) show a composition bias toward basic and acidic residues. Sufficient for chromatin-binding stretches follow at residues 2281–2359 (STQY…PVEI) and 2359–2408 (IKLI…RKMR). The segment at 2281–2408 (STQYVFSPPS…AKPVTRRKMR (128 aa)) is sufficient to block nuclear pore assembly. Residues 2329–2341 (SKPRGRPPKHKAK) constitute a DNA-binding region (a.T hook). The segment covering 2331-2348 (PRGRPPKHKAKAVTRVLK) has biased composition (basic residues). Residues 2378–2389 (DSTEAKGAEKIS) show a composition bias toward basic and acidic residues.

The protein belongs to the ELYS family. In terms of assembly, interacts with the Nup107-160 subcomplex of the NPC.

It is found in the nucleus. The protein resides in the nuclear pore complex. The protein localises to the cytoplasm. It localises to the nucleoplasm. Functionally, required for the assembly of a functional nuclear pore complex (NPC) on the surface of chromosomes as nuclei form at the end of mitosis. May initiate NPC assembly by binding to chromatin and recruiting the Nup107-160 subcomplex, which may in turn recruit membrane vesicles containing pom121 and tmem48/ndc1. Association with chromatin may require the presence of the mcm2-mcm7 complex, suggesting a mechanism for coordination of nuclear assembly and the inactivation of replication licensing. In Xenopus laevis (African clawed frog), this protein is Protein ELYS (ahctf1).